The chain runs to 239 residues: MTKAPIAGNRTGRKLGQRVKNKKMKASSRQWLQRHINDPYVQRAQLEGYRARAAFKLLEIDEKHHILRGAKRIIDLGAAPGSWSQIAAKVTGSTDEDIRVAAIDFLEMAQLPGVKILQLDFLDPTAPEKLLEAVGGTPDLVISDMAAPTTGHHRTDHLRTMHLCEVAAQFAVEVLGEGGHFLTKTFQGGTERELLAMLKQNFRQVVHVKPNASRAESVEMFLLAKGFKGRKVEGDAEKA.

Positions 1 to 20 (MTKAPIAGNRTGRKLGQRVK) are disordered. Residues 11–20 (TGRKLGQRVK) are compositionally biased toward basic residues. S-adenosyl-L-methionine is bound by residues glycine 81, tryptophan 83, aspartate 104, aspartate 120, and aspartate 144. The Proton acceptor role is filled by lysine 184.

It belongs to the class I-like SAM-binding methyltransferase superfamily. RNA methyltransferase RlmE family.

The protein localises to the cytoplasm. It carries out the reaction uridine(2552) in 23S rRNA + S-adenosyl-L-methionine = 2'-O-methyluridine(2552) in 23S rRNA + S-adenosyl-L-homocysteine + H(+). Its function is as follows. Specifically methylates the uridine in position 2552 of 23S rRNA at the 2'-O position of the ribose in the fully assembled 50S ribosomal subunit. In Rhizobium leguminosarum bv. trifolii (strain WSM2304), this protein is Ribosomal RNA large subunit methyltransferase E.